A 394-amino-acid polypeptide reads, in one-letter code: NAD(P)H-quinone oxidoreductase subunit H (394 aa).

Belongs to the complex I 49 kDa subunit family. In terms of assembly, NDH-1 can be composed of about 15 different subunits; different subcomplexes with different compositions have been identified which probably have different functions.

The protein localises to the cellular thylakoid membrane. It catalyses the reaction a plastoquinone + NADH + (n+1) H(+)(in) = a plastoquinol + NAD(+) + n H(+)(out). It carries out the reaction a plastoquinone + NADPH + (n+1) H(+)(in) = a plastoquinol + NADP(+) + n H(+)(out). In terms of biological role, NDH-1 shuttles electrons from an unknown electron donor, via FMN and iron-sulfur (Fe-S) centers, to quinones in the respiratory and/or the photosynthetic chain. The immediate electron acceptor for the enzyme in this species is believed to be plastoquinone. Couples the redox reaction to proton translocation, and thus conserves the redox energy in a proton gradient. Cyanobacterial NDH-1 also plays a role in inorganic carbon-concentration. The protein is NAD(P)H-quinone oxidoreductase subunit H of Prochlorococcus marinus (strain SARG / CCMP1375 / SS120).